The sequence spans 273 residues: Dermonecrotic toxin LhSicTox-alphaIA2biii (273 aa).

His-5 is a catalytic residue. Positions 25 and 27 each coordinate Mg(2+). His-41 serves as the catalytic Nucleophile. 2 disulfides stabilise this stretch: Cys-45-Cys-51 and Cys-47-Cys-190. Position 85 (Asp-85) interacts with Mg(2+).

This sequence belongs to the arthropod phospholipase D family. Class II subfamily. The cofactor is Mg(2+). In terms of tissue distribution, expressed by the venom gland.

The protein resides in the secreted. The catalysed reaction is an N-(acyl)-sphingosylphosphocholine = an N-(acyl)-sphingosyl-1,3-cyclic phosphate + choline. The enzyme catalyses an N-(acyl)-sphingosylphosphoethanolamine = an N-(acyl)-sphingosyl-1,3-cyclic phosphate + ethanolamine. It catalyses the reaction a 1-acyl-sn-glycero-3-phosphocholine = a 1-acyl-sn-glycero-2,3-cyclic phosphate + choline. It carries out the reaction a 1-acyl-sn-glycero-3-phosphoethanolamine = a 1-acyl-sn-glycero-2,3-cyclic phosphate + ethanolamine. In terms of biological role, dermonecrotic toxins cleave the phosphodiester linkage between the phosphate and headgroup of certain phospholipids (sphingolipid and lysolipid substrates), forming an alcohol (often choline) and a cyclic phosphate. This toxin acts on sphingomyelin (SM). It may also act on ceramide phosphoethanolamine (CPE), lysophosphatidylcholine (LPC) and lysophosphatidylethanolamine (LPE), but not on lysophosphatidylserine (LPS), and lysophosphatidylglycerol (LPG). It acts by transphosphatidylation, releasing exclusively cyclic phosphate products as second products. Induces dermonecrosis, hemolysis, increased vascular permeability, edema, inflammatory response, and platelet aggregation. This chain is Dermonecrotic toxin LhSicTox-alphaIA2biii, found in Loxosceles hirsuta (Recluse spider).